The following is a 360-amino-acid chain: Protein RecA (360 aa).

G65–T72 is an ATP binding site.

Belongs to the RecA family.

It localises to the cytoplasm. In terms of biological role, can catalyze the hydrolysis of ATP in the presence of single-stranded DNA, the ATP-dependent uptake of single-stranded DNA by duplex DNA, and the ATP-dependent hybridization of homologous single-stranded DNAs. It interacts with LexA causing its activation and leading to its autocatalytic cleavage. The chain is Protein RecA from Tolumonas auensis (strain DSM 9187 / NBRC 110442 / TA 4).